Here is a 279-residue protein sequence, read N- to C-terminus: MLIIELLKAIFFGIIEGITEWLPVSSTGHLILVQEFIRLNQDKAFIEMFNIVIQLGAIIAVMLIYFERLNPFQPGKTAREVQLTWQLWLKVVIACIPSILIAVPLDNWFEAHFYFMVPIAIALIVYGIAFIWIEKRNAQQEPAVTELARMSYKTAFFIGCFQVLSIVPGTSRSGATILGAIILGTSRTVAADFTFFLAIPTMFGYSGLKAVKFFLDGHHLDFAQVLILLVASLTAFVVSLLAIRFLTDYVKKHDFTIFGKYRIVLGSLLLIYSFFKFVF.

8 helical membrane-spanning segments follow: residues 2–22 (LIIELLKAIFFGIIEGITEWL), 44–64 (AFIEMFNIVIQLGAIIAVMLI), 85–105 (WQLWLKVVIACIPSILIAVPL), 113–133 (FYFMVPIAIALIVYGIAFIWI), 163–183 (VLSIVPGTSRSGATILGAIIL), 188–208 (TVAADFTFFLAIPTMFGYSGL), 223–243 (AQVLILLVASLTAFVVSLLAI), and 255–275 (FTIFGKYRIVLGSLLLIYSFF).

This sequence belongs to the UppP family.

The protein localises to the cell membrane. It catalyses the reaction di-trans,octa-cis-undecaprenyl diphosphate + H2O = di-trans,octa-cis-undecaprenyl phosphate + phosphate + H(+). In terms of biological role, catalyzes the dephosphorylation of undecaprenyl diphosphate (UPP). Confers resistance to bacitracin. This Streptococcus pyogenes serotype M28 (strain MGAS6180) protein is Undecaprenyl-diphosphatase.